The primary structure comprises 138 residues: ATP synthase epsilon chain (138 aa).

Belongs to the ATPase epsilon chain family. In terms of assembly, F-type ATPases have 2 components, CF(1) - the catalytic core - and CF(0) - the membrane proton channel. CF(1) has five subunits: alpha(3), beta(3), gamma(1), delta(1), epsilon(1). CF(0) has three main subunits: a, b and c.

It localises to the cell inner membrane. Its function is as follows. Produces ATP from ADP in the presence of a proton gradient across the membrane. This chain is ATP synthase epsilon chain, found in Psychrobacter sp. (strain PRwf-1).